The sequence spans 686 residues: Probable ferric reductase transmembrane component (686 aa).

7 helical membrane passes run 23–43 (LSGW…VPVV), 79–99 (TLWL…VGSA), 111–131 (VAAA…PLPY), 147–167 (VVVL…ATSG), 178–198 (WMGA…LPAV), 205–225 (TFYY…HVHS), and 256–276 (VTVV…ADLV). Positions 108–666 (LGRVAAAFMP…LAAGPQALVE (559 aa)) constitute a Ferric oxidoreductase domain. 308 to 314 (HPFTVAS) provides a ligand contact to FAD. Residues 392-412 (LMVVGGSAISFGLPFLRILNF) form a helical membrane-spanning segment. 431 to 439 (ILSQFRSNF) serves as a coordination point for NAD(+). 2 N-linked (GlcNAc...) asparagine glycosylation sites follow: Asn-506 and Asn-644.

FAD is required as a cofactor.

Its subcellular location is the membrane. The enzyme catalyses 2 a Fe(II)-siderophore + NAD(+) + H(+) = 2 a Fe(III)-siderophore + NADH. Its function is as follows. Is required for the uptake of Fe(3+) ions. May participate in the transport of electrons from cytoplasm to an extracellular substrate (Fe(3+) ion) via FAD and heme intermediates. Involved in iron homeostasis. This is Probable ferric reductase transmembrane component (FRE8) from Eremothecium gossypii (strain ATCC 10895 / CBS 109.51 / FGSC 9923 / NRRL Y-1056) (Yeast).